The sequence spans 87 residues: MRTLILLTTLLLLALHTQAESPQGSTKEAPDEEQDISVFFGGDKGTALQDAAVKAGVTCSCRTSSCRFGERLSGACRLNGRIYRLCC.

Residues 1-19 (MRTLILLTTLLLLALHTQA) form the signal peptide. A propeptide spanning residues 20–58 (ESPQGSTKEAPDEEQDISVFFGGDKGTALQDAAVKAGVT) is cleaved from the precursor. 3 disulfide bridges follow: Cys-59-Cys-87, Cys-61-Cys-76, and Cys-66-Cys-86.

Belongs to the alpha-defensin family.

It is found in the secreted. In terms of biological role, active in vitro against S.aureus, fungi, Gram-positive and Gram-negative bacteria and to a lesser extent against an enveloped virus. The polypeptide is Neutrophil antibiotic peptide NP-3B (Rattus norvegicus (Rat)).